Here is a 159-residue protein sequence, read N- to C-terminus: Putative 4-hydroxy-4-methyl-2-oxoglutarate aldolase (159 aa).

Substrate contacts are provided by residues 74–77 and Arg96; that span reads GDNL. Asp97 contributes to the a divalent metal cation binding site.

This sequence belongs to the class II aldolase/RraA-like family. As to quaternary structure, homotrimer. It depends on a divalent metal cation as a cofactor.

The catalysed reaction is 4-hydroxy-4-methyl-2-oxoglutarate = 2 pyruvate. It catalyses the reaction oxaloacetate + H(+) = pyruvate + CO2. Its function is as follows. Catalyzes the aldol cleavage of 4-hydroxy-4-methyl-2-oxoglutarate (HMG) into 2 molecules of pyruvate. Also contains a secondary oxaloacetate (OAA) decarboxylase activity due to the common pyruvate enolate transition state formed following C-C bond cleavage in the retro-aldol and decarboxylation reactions. This Bacillus cereus (strain ZK / E33L) protein is Putative 4-hydroxy-4-methyl-2-oxoglutarate aldolase.